A 187-amino-acid chain; its full sequence is Hypoxanthine/guanine phosphoribosyltransferase (187 aa).

The protein belongs to the purine/pyrimidine phosphoribosyltransferase family. Archaeal HPRT subfamily. In terms of assembly, homodimer.

The protein resides in the cytoplasm. It carries out the reaction IMP + diphosphate = hypoxanthine + 5-phospho-alpha-D-ribose 1-diphosphate. The catalysed reaction is GMP + diphosphate = guanine + 5-phospho-alpha-D-ribose 1-diphosphate. The protein operates within purine metabolism; IMP biosynthesis via salvage pathway; IMP from hypoxanthine: step 1/1. Functionally, catalyzes a salvage reaction resulting in the formation of IMP that is energically less costly than de novo synthesis. The sequence is that of Hypoxanthine/guanine phosphoribosyltransferase from Methanococcus voltae (strain ATCC BAA-1334 / A3).